Here is a 301-residue protein sequence, read N- to C-terminus: Homoserine kinase (301 aa).

89 to 99 is an ATP binding site; that stretch reads KPGSGLGSSSA.

Belongs to the GHMP kinase family. Homoserine kinase subfamily.

Its subcellular location is the cytoplasm. The enzyme catalyses L-homoserine + ATP = O-phospho-L-homoserine + ADP + H(+). The protein operates within amino-acid biosynthesis; L-threonine biosynthesis; L-threonine from L-aspartate: step 4/5. Functionally, catalyzes the ATP-dependent phosphorylation of L-homoserine to L-homoserine phosphate. The polypeptide is Homoserine kinase (Methanococcus maripaludis (strain C5 / ATCC BAA-1333)).